The primary structure comprises 117 residues: Large ribosomal subunit protein bL19 (117 aa).

This sequence belongs to the bacterial ribosomal protein bL19 family.

Its function is as follows. This protein is located at the 30S-50S ribosomal subunit interface and may play a role in the structure and function of the aminoacyl-tRNA binding site. The chain is Large ribosomal subunit protein bL19 from Desulfosudis oleivorans (strain DSM 6200 / JCM 39069 / Hxd3) (Desulfococcus oleovorans).